The primary structure comprises 208 residues: DNA-binding protein HupB (208 aa).

The interval M1–S90 is bacterial histone-like domain. Position 3 is an N6-acetyllysine (K3). K3 bears the N6-acetyllysine; alternate; partial mark. K3 is subject to N6-methyllysine; alternate; partial. N6-acetyllysine; partial is present on K72. K86 carries the N6-methyllysine; partial modification. A C-terminus, required for nucleoid localization region spans residues A92 to R208. K94 and K103 each carry N6-acetyllysine; alternate; partial. N6-methyllysine; alternate; partial occurs at positions 94 and 103. The disordered stretch occupies residues P96–R208. The tract at residues A101–K205 is degenerate repeats region. The segment covering K113–R208 has biased composition (basic residues). K116, K136, K149, and K168 each carry N6-acetyllysine.

It belongs to the bacterial histone-like protein family. Long actinobacterial subfamily. May form oligomers. Interacts with RNase E (rne). Post-translationally, in addition to the identifed modifications, is also methylated on one of Arg-53; Arg-54 or Arg-55.

It is found in the cytoplasm. The protein localises to the nucleoid. It localises to the secreted. The protein resides in the cell wall. The catalysed reaction is 4 Fe(2+) + O2 + 4 H(+) = 4 Fe(3+) + 2 H2O. Trans-stilbene derivative 4,4'-[(E)-ethene-1,2 diylbis({5[(phenylcarbonyl)amino]benzene-2,1-diyl}sulfonylimino)] dibenzoic acid (SD1) inhibits DNA binding at 50 uM. SD1 does not inhibit growth in a range of 3-1600 uM. Its function is as follows. A nucleoid-associated protein (NAP) that plays a crucial role in local chromosome architecture. Helps organize newly replicated oriC proximal regions and contributes to the timing of replication initiation and coordinating replication with chromosome segregation. There are between 30,000-60,000 molecules in a log phase cell; the protein-DNA complex is dynamic during the cell cycle, with more complexes near the cell ends. Binds irregularly along the chromosome with higher binding near the origin of replication (oriC) and lowest binding near the chromosome terminus (ter). Binds DNA non-sequence specifically via both its N- and C-terminal domains with high affinity, has no preference for linear or supercoiled DNA. Binds four-way junction DNA. Represses T7 RNA polymerase in vitro. The C-terminal domain enhances DNA end-joining in vitro in the presence of T4 DNA ligase. RNase E and HupB jointly contribute to cellular adaptation to changing growth conditions and survival during antibiotic treatment. In terms of biological role, has ferroxidase activity, converts Fe(2+) into Fe(3+). Binds Fe(3+) but not Fe(2+); prevents the generation of hydroxyl radicals by the Fenton reaction and thus protects DNA from damage. May function in iron storage. Plays a role in epigenetic resistance to antibiotics. Growth on levels of isoniazid (INH) near the minimal inhibitory concentration (MIC) kills most bacteria. The surviving cells grow as either large or small colony variants (SCV), evidence suggest SCVs are associated with persistent infections. Mutating this protein leads to specific loss of SCVs. Functionally, may play a role in cell wall assembly. The sequence is that of DNA-binding protein HupB from Mycolicibacterium smegmatis (strain ATCC 700084 / mc(2)155) (Mycobacterium smegmatis).